The following is a 275-amino-acid chain: Adaptin ear-binding coat-associated protein 1 (275 aa).

A disordered region spans residues 166–190; the sequence is ITTKKGGTSKPKTAGTGGLSLLPPP. Residues 167–179 are compositionally biased toward low complexity; that stretch reads TTKKGGTSKPKTA. Position 211 is a phosphothreonine (Thr-211). Residues 215–275 are disordered; it reads IPKSNHGGSD…APQPSNWVQF (61 aa). Short sequence motifs (WXXF motif) lie at residues 252-255 and 272-275; these read WGDF and WVQF. The span at 256 to 275 shows a compositional bias: polar residues; that stretch reads STASSSVPNQAPQPSNWVQF.

This sequence belongs to the NECAP family. In terms of assembly, interacts with AP1G1 and AP2A1 components of the adapter protein complexes AP-1 and AP-2. Interacts with the GAE domain proteins GGA1, GGA2 and GGA3.

It is found in the cytoplasmic vesicle. The protein resides in the clathrin-coated vesicle membrane. It localises to the cell membrane. Its function is as follows. Involved in endocytosis. This chain is Adaptin ear-binding coat-associated protein 1 (NECAP1), found in Bos taurus (Bovine).